A 178-amino-acid chain; its full sequence is ATP synthase subunit delta (178 aa).

The protein belongs to the ATPase delta chain family. F-type ATPases have 2 components, F(1) - the catalytic core - and F(0) - the membrane proton channel. F(1) has five subunits: alpha(3), beta(3), gamma(1), delta(1), epsilon(1). F(0) has three main subunits: a(1), b(2) and c(10-14). The alpha and beta chains form an alternating ring which encloses part of the gamma chain. F(1) is attached to F(0) by a central stalk formed by the gamma and epsilon chains, while a peripheral stalk is formed by the delta and b chains.

It is found in the cell inner membrane. Functionally, f(1)F(0) ATP synthase produces ATP from ADP in the presence of a proton or sodium gradient. F-type ATPases consist of two structural domains, F(1) containing the extramembraneous catalytic core and F(0) containing the membrane proton channel, linked together by a central stalk and a peripheral stalk. During catalysis, ATP synthesis in the catalytic domain of F(1) is coupled via a rotary mechanism of the central stalk subunits to proton translocation. In terms of biological role, this protein is part of the stalk that links CF(0) to CF(1). It either transmits conformational changes from CF(0) to CF(1) or is implicated in proton conduction. The chain is ATP synthase subunit delta from Cellvibrio japonicus (strain Ueda107) (Pseudomonas fluorescens subsp. cellulosa).